The sequence spans 560 residues: Secreted RxLR effector protein 142 (560 aa).

The N-terminal stretch at 1-22 (MRRAYFVAIALLVAAGGKTAAG) is a signal peptide. Disordered regions lie at residues 48–73 (QSQN…ERTP) and 354–377 (INRP…LNNQ). Residues 54–72 (ESRDPKDDLKLSAGNEERT) show a composition bias toward basic and acidic residues. The RxLR-dEER motif lies at 56–71 (RDPKDDLKLSAGNEER). A compositionally biased stretch (polar residues) spans 361–377 (GPSTNGATTSNGGLNNQ).

The protein belongs to the RxLR effector family.

Its subcellular location is the secreted. It is found in the host nucleus. Functionally, secreted effector that completely suppresses the host cell death induced by cell death-inducing proteins. This chain is Secreted RxLR effector protein 142, found in Plasmopara viticola (Downy mildew of grapevine).